We begin with the raw amino-acid sequence, 580 residues long: Micronemal protein 4 (580 aa).

The N-terminal stretch at Met1 to Ala25 is a signal peptide. Apple domains are found at residues Cys68–Cys137, Cys141–Cys214, Cys232–Cys301, Cys305–Gly375, Cys419–Cys488, and Cys492–Cys565. 15 disulfide bridges follow: Cys68-Cys137, Cys93-Cys115, Cys97-Cys103, Cys141-Cys214, Cys166-Cys188, Cys170-Cys176, Cys232-Cys301, Cys257-Cys279, Cys261-Cys267, Cys305-Cys380, Cys332-Cys354, Cys336-Cys342, Cys419-Cys488, Cys444-Cys466, and Cys448-Cys454.

As to quaternary structure, monomer. Part of the MIC6-MIC1-MIC4 complex. Interacts (via the second apple domain) directly with MIC1 (via the beta-finger region). Interacts with murine TLR2; the interaction promotes activation of bone marrow-derived dendritic cells and macrophages in the host. Interacts with murine TLR4; the interaction promotes activation of bone marrow-derived dendritic cells and macrophages in the host. Proteolytically cleaved at the N- and C-terminus after release from the microneme.

The protein localises to the cytoplasmic vesicle. It is found in the secretory vesicle. Its subcellular location is the microneme. It localises to the host early endosome. Lacto-N-biose inhibits binding to asialofetuin, a host glycoprotein. Functionally, soluble adhesin with carbohydrate-binding activity. Binds to galactose-terminating oligosaccharides. Required for attachment of the parasite to the host cell prior to invasion. Triggers the activation of murine bone marrow-derived dendritic cells and macrophages and production of pro-inflammatory cytokines, such as IL12 (IL12B/IL12A), in host TLR2/TLR4-dependent manner. Triggers the production of anti-inflammatory cytokine IL10 in murine bone marrow-derived macrophages in host TLR4-dependent manner. Induces transient endotoxin tolerance in murine bone marrow-derived macrophages, manifested by reduced TNF-alpha (TNF) production in response to challenge with lipopolysaccharides (LPS). The protein is Micronemal protein 4 of Toxoplasma gondii.